The following is a 198-amino-acid chain: UPF0314 protein Saro_1818 (198 aa).

5 helical membrane passes run 13-33, 62-82, 96-116, 153-173, and 177-197; these read GGSLAAFGVGLAVVIILLGMG, WYSFSHLIHGFLFYGAAHIVW, LALAVLIEGSWEILENSPIII, APVLVTVVLGIGFELFTLWAI, and LALNILMLVWPVEAVRVWQGG.

It belongs to the UPF0314 family.

It localises to the cell membrane. This chain is UPF0314 protein Saro_1818, found in Novosphingobium aromaticivorans (strain ATCC 700278 / DSM 12444 / CCUG 56034 / CIP 105152 / NBRC 16084 / F199).